Here is a 90-residue protein sequence, read N- to C-terminus: [Leu8]-phyllolitorin (90 aa).

An N-terminal signal peptide occupies residues 1-30 (MSAVPFTRVLLISGFLAHLLLSTFVTLTVC). A propeptide spanning residues 31-48 (KEVTEESDDLSKRNVLQR) is cleaved from the precursor. At Q49 the chain carries Pyrrolidone carboxylic acid. Residue M57 is modified to Methionine amide. The propeptide occupies 61 to 90 (SLENTNRRSDEDMEISALFRGSPLKVKRSD).

It belongs to the bombesin/neuromedin-B/ranatensin family. As to expression, expressed by the skin glands.

The protein localises to the secreted. This Phyllomedusa sauvagei (Sauvage's leaf frog) protein is [Leu8]-phyllolitorin.